Consider the following 973-residue polypeptide: ATP-dependent DNA helicase homolog RECG1, chloroplastic/mitochondrial (973 aa).

Residues 1 to 208 are sufficient for chloroplastic and mitochondrial trgeting; the sequence is MAAVTLSPCS…ATSEVEATSD (208 aa). The disordered stretch occupies residues 174 to 200; that stretch reads LLQNDDSSDPREDILDDGSSFTSKTAT. The 190-residue stretch at 536–725 folds into the Helicase ATP-binding domain; sequence DLKRPVPMNR…LYGDISLTQI (190 aa). Residue 549 to 556 participates in ATP binding; that stretch reads GDVGCGKT. The short motif at 655–658 is the DEQQ box element; the sequence is DEQQ. The region spanning 746–904 is the Helicase C-terminal domain; it reads GIKEVYSMML…GFYLANIDLL (159 aa).

Belongs to the helicase family. RecG subfamily. Expressed in most tissues, not seen in pollen, ovules or developing seeds.

Its subcellular location is the plastid. It localises to the chloroplast. The protein resides in the mitochondrion. The enzyme catalyses Couples ATP hydrolysis with the unwinding of duplex DNA by translocating in the 3'-5' direction.. The catalysed reaction is ATP + H2O = ADP + phosphate + H(+). In terms of biological role, plays a critical role in recombination and DNA repair. Helps process Holliday junction (HJ) intermediates to mature products by catalyzing branch migration. Has replication fork regression activity, unwinds stalled or blocked replication forks to make a HJ that can be resolved. Has a DNA unwinding activity characteristic of a DNA helicase with 3'-5' polarity. Plays a role in recombination surveillance and repair of double-stranded (ds)DNA breaks in the mitochondrion. May be able to dissociate D- and R-loops. Able to complement UV sensitivity of a recG deletion in E.coli. This chain is ATP-dependent DNA helicase homolog RECG1, chloroplastic/mitochondrial, found in Arabidopsis thaliana (Mouse-ear cress).